The following is a 431-amino-acid chain: F-box/kelch-repeat protein At4g19930 (431 aa).

Residues His-37–Leu-83 form the F-box domain. 2 Kelch repeats span residues Leu-143–Lys-189 and Trp-227–Val-275.

In Arabidopsis thaliana (Mouse-ear cress), this protein is F-box/kelch-repeat protein At4g19930.